Reading from the N-terminus, the 395-residue chain is Protein PELOTA 2 (395 aa).

This sequence belongs to the eukaryotic release factor 1 family. Pelota subfamily. It depends on a divalent metal cation as a cofactor.

The protein resides in the cytoplasm. Its subcellular location is the nucleus. Component of the Pelota-HBS1L complex, a complex that recognizes stalled ribosomes and triggers the No-Go Decay (NGD) pathway. In the Pelota-HBS1L complex, pelo recognizes ribosomes stalled at the 3' end of an mRNA and engages stalled ribosomes by destabilizing mRNA in the mRNA channel. Following ribosome-binding, the Pelota-HBS1L complex promotes the disassembly of stalled ribosomes, followed by degradation of damaged mRNAs as part of the NGD pathway. This Arabidopsis thaliana (Mouse-ear cress) protein is Protein PELOTA 2 (PEL2).